The sequence spans 227 residues: Charged multivesicular body protein 4b (227 aa).

Disordered regions lie at residues 1–26 and 186–227; these read MSGI…SPQE and SGPE…AGNM. Residues 9–20 are compositionally biased toward gly residues; it reads FGAGAGGKGAGK. Residues 25–185 are a coiled coil; that stretch reads QEAIQRLRDT…EELDKNLLEI (161 aa).

This sequence belongs to the SNF7 family. In terms of assembly, probable core component of the endosomal sorting required for transport complex III (ESCRT-III). ESCRT-III components are thought to multimerize to form a flat lattice on the perimeter membrane of the endosome.

It is found in the cytoplasm. The protein localises to the cytosol. It localises to the late endosome membrane. Its subcellular location is the midbody. Functionally, probable core component of the endosomal sorting required for transport complex III (ESCRT-III) which is involved in multivesicular bodies (MVBs) formation and sorting of endosomal cargo proteins into MVBs. MVBs contain intraluminal vesicles (ILVs) that are generated by invagination and scission from the limiting membrane of the endosome and mostly are delivered to lysosomes enabling degradation of membrane proteins, such as stimulated growth factor receptors, lysosomal enzymes and lipids. The protein is Charged multivesicular body protein 4b (CHMP4B) of Gallus gallus (Chicken).